Consider the following 178-residue polypeptide: ATP-dependent protease subunit HslV (178 aa).

Threonine 7 is an active-site residue. 3 residues coordinate Na(+): glycine 162, cysteine 165, and threonine 168.

This sequence belongs to the peptidase T1B family. HslV subfamily. As to quaternary structure, a double ring-shaped homohexamer of HslV is capped on each side by a ring-shaped HslU homohexamer. The assembly of the HslU/HslV complex is dependent on binding of ATP.

It localises to the cytoplasm. The enzyme catalyses ATP-dependent cleavage of peptide bonds with broad specificity.. Allosterically activated by HslU binding. Its function is as follows. Protease subunit of a proteasome-like degradation complex believed to be a general protein degrading machinery. This Burkholderia mallei (strain ATCC 23344) protein is ATP-dependent protease subunit HslV.